We begin with the raw amino-acid sequence, 456 residues long: Toxin CfTX-1 (456 aa).

The N-terminal stretch at 1–20 (MVKMLFFAFLPLLFMTGIAA) is a signal peptide.

The protein belongs to the jellyfish toxin family. Type I subfamily. In terms of assembly, oligomer. Contains disulfide bonds. As to expression, nematocytes.

The protein resides in the secreted. It is found in the nematocyst. It localises to the target cell membrane. May cause profound effects on the cardiovascular system of anesthetized rats (at 25 ug/kg), since the fraction containing this toxin and CfTX-2 produces an initial increase in mean arterial pressure, followed by cardiovascular collapse in all animals within 1 minute of injection. To note, the same fraction does not induce significant change in heart rate. Has weak hemolytic activity. Is lethal to crayfish. Causes cutaneous inflammation in humans. May act as a pore-forming toxin, disrupting normal transmembrane ion concentration gradients in susceptible cells. The chain is Toxin CfTX-1 from Chironex fleckeri (Australian box jellyfish).